The chain runs to 301 residues: UDP-N-acetylenolpyruvoylglucosamine reductase 1 (301 aa).

One can recognise an FAD-binding PCMH-type domain in the interval 29–196 (KIGGPADILI…LEAVFQLQAG (168 aa)). Residue Arg-174 is part of the active site. Ser-225 functions as the Proton donor in the catalytic mechanism. Glu-295 is a catalytic residue.

It belongs to the MurB family. FAD is required as a cofactor.

It is found in the cytoplasm. It catalyses the reaction UDP-N-acetyl-alpha-D-muramate + NADP(+) = UDP-N-acetyl-3-O-(1-carboxyvinyl)-alpha-D-glucosamine + NADPH + H(+). Its pathway is cell wall biogenesis; peptidoglycan biosynthesis. In terms of biological role, cell wall formation. The protein is UDP-N-acetylenolpyruvoylglucosamine reductase 1 (murB1) of Bacillus cereus (strain ATCC 14579 / DSM 31 / CCUG 7414 / JCM 2152 / NBRC 15305 / NCIMB 9373 / NCTC 2599 / NRRL B-3711).